The chain runs to 204 residues: ATP phosphoribosyltransferase (204 aa).

It belongs to the ATP phosphoribosyltransferase family. Short subfamily. Heteromultimer composed of HisG and HisZ subunits.

It localises to the cytoplasm. It carries out the reaction 1-(5-phospho-beta-D-ribosyl)-ATP + diphosphate = 5-phospho-alpha-D-ribose 1-diphosphate + ATP. The protein operates within amino-acid biosynthesis; L-histidine biosynthesis; L-histidine from 5-phospho-alpha-D-ribose 1-diphosphate: step 1/9. Functionally, catalyzes the condensation of ATP and 5-phosphoribose 1-diphosphate to form N'-(5'-phosphoribosyl)-ATP (PR-ATP). Has a crucial role in the pathway because the rate of histidine biosynthesis seems to be controlled primarily by regulation of HisG enzymatic activity. The polypeptide is ATP phosphoribosyltransferase (Staphylococcus aureus (strain bovine RF122 / ET3-1)).